We begin with the raw amino-acid sequence, 487 residues long: MQSAVDLGGRPIHFIGVGGIGMSALAHILLKRQLPISGSDARANHITQKLESQGAQIFSRQEATNIKQLCQGSSAPPQVICSTAIHEDNPEYQAAVQAGCPIFHRSDVLAALMQEFPQSIAIAGTHGKTTTSSLVGYLLLQASLDPTIIVGGEVAAWGGNARTGESPYLVAEADESDGSLVKFFPHIGVITNIELDHPDHYTSLDQVVSIFQEFVDHCHTLIVSVDCPTIADRFLALATDQSMITYSLSSKVSADYTVQNIDYSGQGTIVEVLERGESLGQLELPLLGEHNLSNALAAVAVGRYVGLEFPAIAKALRTFSGAKRRFEIYGEAQGICLIDDYAHHPSEIQVTLASAKLQAQAAAATYSQSRVVAVFQPHRYSRAATFFQEFSQSFQDADLVVVTDIYSAGEANPGTINGKKLADAIAANHSVVTFQPTLTNVIDFLQGHLQSGDVVLFLGAGDLNRIIPDLLTHFQVSSKPSPEVVLK.

ATP is bound at residue 124–130 (GTHGKTT).

This sequence belongs to the MurCDEF family.

It localises to the cytoplasm. It carries out the reaction UDP-N-acetyl-alpha-D-muramate + L-alanine + ATP = UDP-N-acetyl-alpha-D-muramoyl-L-alanine + ADP + phosphate + H(+). The protein operates within cell wall biogenesis; peptidoglycan biosynthesis. Functionally, cell wall formation. In Acaryochloris marina (strain MBIC 11017), this protein is UDP-N-acetylmuramate--L-alanine ligase.